A 176-amino-acid chain; its full sequence is Cytochrome b (176 aa).

A run of 3 helical transmembrane segments spans residues 33–53 (FGSLLGICLMLQIMTGLFLAM), 77–98 (WMLRYLHANGASMFFICLYLHV), and 113–133 (WNVGVLLLFTVMATAFMGYVL). Residues His-83 and His-97 each contribute to the heme b site.

This sequence belongs to the cytochrome b family. As to quaternary structure, the cytochrome bc1 complex contains 11 subunits: 3 respiratory subunits (MT-CYB, CYC1 and UQCRFS1), 2 core proteins (UQCRC1 and UQCRC2) and 6 low-molecular weight proteins (UQCRH/QCR6, UQCRB/QCR7, UQCRQ/QCR8, UQCR10/QCR9, UQCR11/QCR10 and a cleavage product of UQCRFS1). This cytochrome bc1 complex then forms a dimer. It depends on heme b as a cofactor.

The protein resides in the mitochondrion inner membrane. Its function is as follows. Component of the ubiquinol-cytochrome c reductase complex (complex III or cytochrome b-c1 complex) that is part of the mitochondrial respiratory chain. The b-c1 complex mediates electron transfer from ubiquinol to cytochrome c. Contributes to the generation of a proton gradient across the mitochondrial membrane that is then used for ATP synthesis. This Idionycteris phyllotis (Allen's big-eared bat) protein is Cytochrome b (MT-CYB).